The following is a 413-amino-acid chain: Transcription factor bHLH23 (413 aa).

Positions 40 to 75 (SSQTQTPSCDPPLILRGSGSGDGEGNGPLPQPPPPL) are disordered. Threonine 186 carries the phosphothreonine modification. Serine 191 carries the post-translational modification Phosphoserine. 2 disordered regions span residues 232 to 278 (TEPV…RSRA) and 391 to 413 (ETEQETMSLLLREDKRTKQKMFS). Residues 246–257 (TDERKRKTREET) show a composition bias toward basic and acidic residues. Positions 277 to 326 (RAAIMHKLSERRRRQKINEMMKALQELLPRCTKTDRSSMLDDVIEYVKSL) constitute a bHLH domain.

In terms of assembly, homodimer. As to expression, expressed constitutively in leaves, stems, and flowers.

The protein resides in the nucleus. The polypeptide is Transcription factor bHLH23 (BHLH23) (Arabidopsis thaliana (Mouse-ear cress)).